A 650-amino-acid polypeptide reads, in one-letter code: Methionine--tRNA ligase (650 aa).

The 'HIGH' region motif lies at 11–21 (YYVNDIPHIGH). Residues C126, C129, C147, and C150 each contribute to the Zn(2+) site. Residues 301 to 305 (KMSKS) carry the 'KMSKS' region motif. K304 contributes to the ATP binding site. Positions 513–535 (EKTEKAGEASPEKNEKEKKDAKE) are disordered. In terms of domain architecture, tRNA-binding spans 549–650 (DFKKVEIKVG…REKIAGSLIS (102 aa)).

It belongs to the class-I aminoacyl-tRNA synthetase family. MetG type 2A subfamily. Homodimer. The cofactor is Zn(2+).

Its subcellular location is the cytoplasm. It carries out the reaction tRNA(Met) + L-methionine + ATP = L-methionyl-tRNA(Met) + AMP + diphosphate. In terms of biological role, is required not only for elongation of protein synthesis but also for the initiation of all mRNA translation through initiator tRNA(fMet) aminoacylation. The sequence is that of Methionine--tRNA ligase (metG) from Helicobacter pylori (strain ATCC 700392 / 26695) (Campylobacter pylori).